The following is a 635-amino-acid chain: Glycosyltransferase-like protein gnt13 (635 aa).

Topologically, residues 1–18 (MNINTLIINFNKVKRMKN) are cytoplasmic. A helical; Signal-anchor for type II membrane protein membrane pass occupies residues 19–38 (FLILTLLVVMVVVFLQGPTL). Residues 39 to 635 (MINNSGQGMG…PNECFSDHHW (597 aa)) are Extracellular-facing. 2 N-linked (GlcNAc...) asparagine glycosylation sites follow: N41 and N179. Disordered stretches follow at residues 300–358 (NINN…NNID) and 389–458 (NIDN…NNEP). A compositionally biased stretch (low complexity) spans 389–456 (NIDNNNSNYN…NNNNNNNNNN (68 aa)). N-linked (GlcNAc...) asparagine glycans are attached at residues N393 and N535.

Belongs to the glycosyltransferase 8 family. Highly divergent.

The protein resides in the membrane. The sequence is that of Glycosyltransferase-like protein gnt13 (gnt13) from Dictyostelium discoideum (Social amoeba).